The chain runs to 611 residues: Mitochondrial import receptor subunit TOM70 (611 aa).

An N-acetylalanine modification is found at Ala-2. Residues 2–41 (AASKPIEAAMAAAAAPGSGNGVGGGGGTAGPGSGAGTLPR) lie on the Mitochondrial intermembrane side of the membrane. The chain crosses the membrane as a helical span at residues 42–62 (WHVALAIGAPLLLGAGAMYLW). At 63–611 (SRRRRRREAG…KKYGLKPPTL (549 aa)) the chain is on the cytoplasmic side. The interval 69–110 (REAGGRGDASGLKRNSERKTPEGRASPALGSGHHDGSGDSLE) is disordered. Arg-74 carries the omega-N-methylarginine modification. A phosphoserine mark is found at Ser-94, Ser-99, Ser-105, Ser-108, and Ser-113. TPR repeat units follow at residues 117–150 (AQAA…CPTE) and 156–189 (STFY…NPKY). Lys-188 carries the N6-acetyllysine modification. Lys-278 participates in a covalent cross-link: Glycyl lysine isopeptide (Lys-Gly) (interchain with G-Cter in SUMO2). TPR repeat units lie at residues 297–330 (ENSG…QGKY), 332–365 (AEAL…KEAN), 370–403 (ANAL…DPMN), 404–437 (SDVY…RPKF), 445–478 (CFAL…FPRC), 479–512 (AEGY…EPDN), 514–547 (TTYV…DNKC), and 548–581 (DFAY…AKSE).

Belongs to the Tom70 family. In terms of assembly, forms part of the preprotein translocase complex of the outer mitochondrial membrane (TOM complex) which consists of at least 7 different proteins (TOMM5, TOMM6, TOMM7, TOMM20, TOMM22, TOMM40 and TOMM70). Interacts with CAPN8. Interacts with TRADD, TRAF6 and STING. Interacts with MAVS. Interacts with HSPA8 and HSP90AA1; both interactions are required for preprotein mitochondrial import. The interaction with HSP90AA1 is direct and mediates the association of TOMM70 with IRF3 and TBK1. Upon mitochondrial depolarization, interacts with PINK1; the interaction is required for PINK1-TOM-TIM23 supercomplex formation which is critical for PINK1 stabilization at the outer mitochondrial membrane, kinase activation and downstream mitophagy. In terms of tissue distribution, expressed in the base region of the oxyntic and pyloric mucosae.

The protein resides in the mitochondrion outer membrane. Functionally, acts as a receptor of the preprotein translocase complex of the outer mitochondrial membrane (TOM complex). Recognizes and mediates the translocation of mitochondrial preproteins from the cytosol into the mitochondria in a chaperone dependent manner. Mediates TBK1 and IRF3 activation induced by MAVS in response to virus infection and promotes host antiviral responses during virus infection. This chain is Mitochondrial import receptor subunit TOM70, found in Mus musculus (Mouse).